The following is a 333-amino-acid chain: DNA repair and recombination protein RadA (333 aa).

Residue 127 to 134 coordinates ATP; sequence GEFGSGKT.

This sequence belongs to the eukaryotic RecA-like protein family.

Its function is as follows. Involved in DNA repair and in homologous recombination. Binds and assemble on single-stranded DNA to form a nucleoprotein filament. Hydrolyzes ATP in a ssDNA-dependent manner and promotes DNA strand exchange between homologous DNA molecules. The sequence is that of DNA repair and recombination protein RadA from Pyrobaculum arsenaticum (strain DSM 13514 / JCM 11321 / PZ6).